We begin with the raw amino-acid sequence, 899 residues long: Inositol 1,4,5-triphosphate receptor associated 1 (899 aa).

Disordered stretches follow at residues 32–110 (PGTH…HRHL), 164–286 (RRGR…PLQH), 324–391 (KTAR…EEPG), and 463–486 (AAEQDKGVSPELAPAAEEEESKSG). Positions 100–110 (SPHRRLSHRHL) are enriched in basic residues. Ser-106 is modified (phosphoserine). Positions 140–172 (SEEDKKKNLALLEEAKLVSERFLTRRGRKSRSS) are interaction with PRKG1. Residues 171–180 (SSLGDSPSAV) show a composition bias toward polar residues. Positions 181-203 (SPNLSSGASPASSRSCSLTISTS) are enriched in low complexity. Basic and acidic residues predominate over residues 266–281 (TVEKTKELTVEQKENF). The span at 333–351 (PRTTAQGSGGTVSPHSLGQ) shows a compositional bias: polar residues. Residue Ser-382 is modified to Phosphoserine. The tract at residues 521-567 (NVFVQLSLAFRNDSYTLESRINQAERERNLTEENTEKELENFKASIT) is interaction with ITPR1. Residues 534 to 632 (SYTLESRINQ…MQYVENLKRT (99 aa)) adopt a coiled-coil conformation. Residues Ser-670 and Ser-683 each carry the phosphoserine modification. 2 disordered regions span residues 695-722 (LPGQAPSSSPMPSLPALSESSNGKSSIS) and 757-818 (TSQE…DQGS). The span at 699–715 (APSSSPMPSLPALSESS) shows a compositional bias: low complexity. Composition is skewed to basic and acidic residues over residues 759–770 (QETKAKAEEEAY) and 777–787 (GVKKTEELQDL). Residues 788-814 (KEEEEEEQKTESPEEPEEVEETQEDEK) show a composition bias toward acidic residues. Residues 839–859 (WQVIWMMAAVMLVLSVVLGLY) traverse the membrane as a helical segment. The segment at 867-899 (EEADGPPGRSTCSAAQRDSWWSSGLQQELPAEQ) is disordered. A compositionally biased stretch (polar residues) spans 876–892 (STCSAAQRDSWWSSGLQ).

As to quaternary structure, part of cGMP kinase signaling complex at least composed of ACTA2/alpha-actin, CNN1/calponin H1, PLN/phospholamban, PRKG1 and ITPR1. Interacts with PRKG1/cGKI-beta and ITPR1/IP3R type I. Interacts with HCN4; regulates HCN4 channel activity. Phosphorylated by PRKG1/cGKI. As to expression, highly expressed in smooth muscle such as aorta, colon and uterus. Detected in the brain, in the thalamus, in the hippocampus and myenteric plexus. Highly expressed in megakaryocytes. Down-regulated during macrophage differentiation.

It localises to the membrane. Its subcellular location is the cytoplasm. The protein localises to the perinuclear region. The protein resides in the sarcoplasmic reticulum. Its function is as follows. Plays a role as NO/PRKG1-dependent regulator of IP3-induced calcium release; its phosphorylation by PRKG1 inhibits bradykinin and IP3-induced calcium release from intracellular stores. Recruits PRKG1 to the endoplasmic reticulum and may mediate the assembly of PRKG1 and ITPR1 in a macrocomplex. Involved in PRKG1 signaling cascade leading to inhibition of platelet activation and aggregation. Also mediates NO-dependent inhibition of calcium signaling in gastrointestinal smooth muscle contributing to NO-dependent relaxation. Plays a role in the regulation of cellular excitability by regulating the hyperpolarization-activated cyclic nucleotide-gated HCN4 channel activity. The sequence is that of Inositol 1,4,5-triphosphate receptor associated 1 (Irag1) from Mus musculus (Mouse).